The sequence spans 623 residues: tRNA uridine 5-carboxymethylaminomethyl modification enzyme MnmG (623 aa).

G12–G17 is an FAD binding site. G272–F286 lines the NAD(+) pocket.

This sequence belongs to the MnmG family. As to quaternary structure, homodimer. Heterotetramer of two MnmE and two MnmG subunits. It depends on FAD as a cofactor.

It localises to the cytoplasm. NAD-binding protein involved in the addition of a carboxymethylaminomethyl (cmnm) group at the wobble position (U34) of certain tRNAs, forming tRNA-cmnm(5)s(2)U34. The chain is tRNA uridine 5-carboxymethylaminomethyl modification enzyme MnmG from Christiangramia forsetii (strain DSM 17595 / CGMCC 1.15422 / KT0803) (Gramella forsetii).